Consider the following 504-residue polypeptide: ATP synthase subunit beta (504 aa).

181 to 188 lines the ATP pocket; the sequence is GGAGVGKT.

The protein belongs to the ATPase alpha/beta chains family. In terms of assembly, F-type ATPases have 2 components, CF(1) - the catalytic core - and CF(0) - the membrane proton channel. CF(1) has five subunits: alpha(3), beta(3), gamma(1), delta(1), epsilon(1). CF(0) has three main subunits: a(1), b(2) and c(9-12). The alpha and beta chains form an alternating ring which encloses part of the gamma chain. CF(1) is attached to CF(0) by a central stalk formed by the gamma and epsilon chains, while a peripheral stalk is formed by the delta and b chains.

It is found in the cell inner membrane. The catalysed reaction is ATP + H2O + 4 H(+)(in) = ADP + phosphate + 5 H(+)(out). Functionally, produces ATP from ADP in the presence of a proton gradient across the membrane. The catalytic sites are hosted primarily by the beta subunits. The sequence is that of ATP synthase subunit beta from Ehrlichia ruminantium (strain Gardel).